Reading from the N-terminus, the 223-residue chain is Ribonuclease T (223 aa).

The region spanning 20-195 (VVIDVETAGF…YDTERTAELF (176 aa)) is the Exonuclease domain. Residues aspartate 23, glutamate 25, histidine 182, and aspartate 187 each contribute to the Mg(2+) site. Histidine 182 functions as the Proton donor/acceptor in the catalytic mechanism.

Belongs to the RNase T family. As to quaternary structure, homodimer. It depends on Mg(2+) as a cofactor.

Functionally, trims short 3' overhangs of a variety of RNA species, leaving a one or two nucleotide 3' overhang. Responsible for the end-turnover of tRNA: specifically removes the terminal AMP residue from uncharged tRNA (tRNA-C-C-A). Also appears to be involved in tRNA biosynthesis. The chain is Ribonuclease T from Photobacterium profundum (strain SS9).